The sequence spans 104 residues: Large ribosomal subunit protein bL21 (104 aa).

The protein belongs to the bacterial ribosomal protein bL21 family. As to quaternary structure, part of the 50S ribosomal subunit. Contacts protein L20.

Its function is as follows. This protein binds to 23S rRNA in the presence of protein L20. This is Large ribosomal subunit protein bL21 from Leptospira interrogans serogroup Icterohaemorrhagiae serovar copenhageni (strain Fiocruz L1-130).